Here is a 340-residue protein sequence, read N- to C-terminus: 4-hydroxy-3-methylbut-2-enyl diphosphate reductase (340 aa).

Residue Cys18 participates in [4Fe-4S] cluster binding. (2E)-4-hydroxy-3-methylbut-2-enyl diphosphate is bound by residues His47 and His83. Dimethylallyl diphosphate is bound by residues His47 and His83. Residues His47 and His83 each coordinate isopentenyl diphosphate. Cys105 contacts [4Fe-4S] cluster. His133 contacts (2E)-4-hydroxy-3-methylbut-2-enyl diphosphate. Residue His133 coordinates dimethylallyl diphosphate. Position 133 (His133) interacts with isopentenyl diphosphate. Glu135 functions as the Proton donor in the catalytic mechanism. Thr174 is a (2E)-4-hydroxy-3-methylbut-2-enyl diphosphate binding site. Cys204 contacts [4Fe-4S] cluster. (2E)-4-hydroxy-3-methylbut-2-enyl diphosphate contacts are provided by Ser232, Ser233, Asn234, and Ser277. Residues Ser232, Ser233, Asn234, and Ser277 each coordinate dimethylallyl diphosphate. Residues Ser232, Ser233, Asn234, and Ser277 each coordinate isopentenyl diphosphate.

This sequence belongs to the IspH family. The cofactor is [4Fe-4S] cluster.

It carries out the reaction isopentenyl diphosphate + 2 oxidized [2Fe-2S]-[ferredoxin] + H2O = (2E)-4-hydroxy-3-methylbut-2-enyl diphosphate + 2 reduced [2Fe-2S]-[ferredoxin] + 2 H(+). The catalysed reaction is dimethylallyl diphosphate + 2 oxidized [2Fe-2S]-[ferredoxin] + H2O = (2E)-4-hydroxy-3-methylbut-2-enyl diphosphate + 2 reduced [2Fe-2S]-[ferredoxin] + 2 H(+). It functions in the pathway isoprenoid biosynthesis; dimethylallyl diphosphate biosynthesis; dimethylallyl diphosphate from (2E)-4-hydroxy-3-methylbutenyl diphosphate: step 1/1. It participates in isoprenoid biosynthesis; isopentenyl diphosphate biosynthesis via DXP pathway; isopentenyl diphosphate from 1-deoxy-D-xylulose 5-phosphate: step 6/6. In terms of biological role, catalyzes the conversion of 1-hydroxy-2-methyl-2-(E)-butenyl 4-diphosphate (HMBPP) into a mixture of isopentenyl diphosphate (IPP) and dimethylallyl diphosphate (DMAPP). Acts in the terminal step of the DOXP/MEP pathway for isoprenoid precursor biosynthesis. This Bartonella quintana (strain Toulouse) (Rochalimaea quintana) protein is 4-hydroxy-3-methylbut-2-enyl diphosphate reductase.